The sequence spans 302 residues: Adipolin (302 aa).

Positions 1–20 (MRRWAWAAVVVLLGPQLVLL) are cleaved as a signal peptide. Disordered stretches follow at residues 28 to 68 (EAQR…GPEF) and 86 to 110 (ALRK…PPGA). An N-linked (GlcNAc...) asparagine glycan is attached at Asn43. Residues 86 to 100 (ALRKRCGSRDKKPRD) are compositionally biased toward basic and acidic residues. In terms of domain architecture, C1q spans 147-302 (LRLVGEAFHC…SSFSGLLLGT (156 aa)).

It belongs to the adipolin/erythroferrone family. In terms of assembly, homomultimer; disulfide-linked. May interact with ERFE. In terms of processing, processed into Adipolin fC1QTNF12 and Adipolin gC1QTNF12 by FURIN. Insulin enhances endogenous C1QTNF12 cleavage. As to expression, predominantly expressed by adipose tissues.

It localises to the secreted. Its function is as follows. Insulin-sensitizing adipocyte-secreted protein (adipokine) that regulates glucose metabolism in liver and adipose tissue. Promotes glucose uptake in adipocytes and suppresses de novo glucose production in hepatocytes via the PI3K-Akt signaling pathway. Administration lead to reduction of blood glucose. Able to attenuate inflammation in fat tissue. In Homo sapiens (Human), this protein is Adipolin.